Reading from the N-terminus, the 205-residue chain is Small ribosomal subunit protein uS4 (205 aa).

Residues 1 to 12 (MSKRVQAKHKLD) show a composition bias toward basic residues. The segment at 1–49 (MSKRVQAKHKLDRRMGQNIWGRPKSPVNRREYGPGQHGQRRKGKMSDFG) is disordered. An S4 RNA-binding domain is found at 94-155 (RRLDAVVYRS…ASRQLEIVVV (62 aa)).

The protein belongs to the universal ribosomal protein uS4 family. As to quaternary structure, part of the 30S ribosomal subunit. Contacts protein S5. The interaction surface between S4 and S5 is involved in control of translational fidelity.

In terms of biological role, one of the primary rRNA binding proteins, it binds directly to 16S rRNA where it nucleates assembly of the body of the 30S subunit. With S5 and S12 plays an important role in translational accuracy. The chain is Small ribosomal subunit protein uS4 from Methylorubrum extorquens (strain CM4 / NCIMB 13688) (Methylobacterium extorquens).